Here is a 258-residue protein sequence, read N- to C-terminus: Homeobox protein VENTX (258 aa).

Positions 1 to 32 are enriched in polar residues; it reads MRLSSSPPRGPQQLSSFGSVDWLSQSSCSGPT. Disordered stretches follow at residues 1-93 and 227-248; these read MRLS…RAPR and SHPPTPGRPSLGPALSTGPRGL. A DNA-binding region (homeobox) is located at residues 91 to 150; the sequence is APRVRTAFTMEQVRTLEGVFQHHQYLSPLERKRLAREMQLSEVQIKTWFQNRRMKHKRQM.

In terms of tissue distribution, expressed in bone marrow of patients recovering from chemotherapy. Also expressed in an erythroleukemia cell line.

Its subcellular location is the nucleus. May be involved in ventralization. The chain is Homeobox protein VENTX (VENTX) from Homo sapiens (Human).